The chain runs to 309 residues: Aspartate carbamoyltransferase catalytic subunit (309 aa).

The carbamoyl phosphate site is built by arginine 55 and threonine 56. Lysine 85 serves as a coordination point for L-aspartate. Positions 106, 135, and 138 each coordinate carbamoyl phosphate. Residues arginine 168 and arginine 230 each coordinate L-aspartate. Leucine 268 and proline 269 together coordinate carbamoyl phosphate.

This sequence belongs to the aspartate/ornithine carbamoyltransferase superfamily. ATCase family. In terms of assembly, heterododecamer (2C3:3R2) of six catalytic PyrB chains organized as two trimers (C3), and six regulatory PyrI chains organized as three dimers (R2).

It catalyses the reaction carbamoyl phosphate + L-aspartate = N-carbamoyl-L-aspartate + phosphate + H(+). Its pathway is pyrimidine metabolism; UMP biosynthesis via de novo pathway; (S)-dihydroorotate from bicarbonate: step 2/3. Functionally, catalyzes the condensation of carbamoyl phosphate and aspartate to form carbamoyl aspartate and inorganic phosphate, the committed step in the de novo pyrimidine nucleotide biosynthesis pathway. The protein is Aspartate carbamoyltransferase catalytic subunit of Aliivibrio fischeri (strain ATCC 700601 / ES114) (Vibrio fischeri).